We begin with the raw amino-acid sequence, 447 residues long: Kynureninase (447 aa).

Pyridoxal 5'-phosphate-binding positions include Leu-106, Thr-107, 134-137, Asp-220, His-223, and Tyr-245; that span reads FPSD. At Lys-246 the chain carries N6-(pyridoxal phosphate)lysine. The pyridoxal 5'-phosphate site is built by Trp-275 and Asn-303.

It belongs to the kynureninase family. Homodimer. The cofactor is pyridoxal 5'-phosphate.

It localises to the cytoplasm. It carries out the reaction L-kynurenine + H2O = anthranilate + L-alanine + H(+). The catalysed reaction is 3-hydroxy-L-kynurenine + H2O = 3-hydroxyanthranilate + L-alanine + H(+). Its pathway is amino-acid degradation; L-kynurenine degradation; L-alanine and anthranilate from L-kynurenine: step 1/1. It functions in the pathway cofactor biosynthesis; NAD(+) biosynthesis; quinolinate from L-kynurenine: step 2/3. In terms of biological role, catalyzes the cleavage of L-kynurenine (L-Kyn) and L-3-hydroxykynurenine (L-3OHKyn) into anthranilic acid (AA) and 3-hydroxyanthranilic acid (3-OHAA), respectively. The chain is Kynureninase from Eremothecium gossypii (strain ATCC 10895 / CBS 109.51 / FGSC 9923 / NRRL Y-1056) (Yeast).